Reading from the N-terminus, the 607-residue chain is Elongation factor 4 (607 aa).

The region spanning 11 to 193 (KNIRNFSIIA…KIVETIPAPS (183 aa)) is the tr-type G domain. Residues 23–28 (DHGKST) and 140–143 (NKID) contribute to the GTP site.

Belongs to the TRAFAC class translation factor GTPase superfamily. Classic translation factor GTPase family. LepA subfamily.

It is found in the cell membrane. The enzyme catalyses GTP + H2O = GDP + phosphate + H(+). In terms of biological role, required for accurate and efficient protein synthesis under certain stress conditions. May act as a fidelity factor of the translation reaction, by catalyzing a one-codon backward translocation of tRNAs on improperly translocated ribosomes. Back-translocation proceeds from a post-translocation (POST) complex to a pre-translocation (PRE) complex, thus giving elongation factor G a second chance to translocate the tRNAs correctly. Binds to ribosomes in a GTP-dependent manner. This chain is Elongation factor 4, found in Staphylococcus carnosus (strain TM300).